The primary structure comprises 986 residues: Vacuolar membrane protease (986 aa).

The Cytoplasmic portion of the chain corresponds to 1-20 (MATPRAQKFNPIAFTPGPVT). The chain crosses the membrane as a helical span at residues 21-41 (LITTIVYLALLIPILVISLVV). Over 42–392 (PPAPETSPEG…AFAVFRLHTL (351 aa)) the chain is Vacuolar. N-linked (GlcNAc...) asparagine glycosylation is found at asparagine 53, asparagine 116, and asparagine 119. Residues histidine 175 and aspartate 187 each coordinate Zn(2+). Catalysis depends on glutamate 221, which acts as the Proton acceptor. Zn(2+) is bound at residue glutamate 222. Residue asparagine 238 is glycosylated (N-linked (GlcNAc...) asparagine). 2 residues coordinate Zn(2+): glutamate 247 and histidine 320. A helical transmembrane segment spans residues 393–413 (FALSVTLLIVAPLVIFITAIV). Residues 414–447 (LSKTDRMYLFSMSKSLGGTDERVSLRGLRGLFRT) lie on the Cytoplasmic side of the membrane. The helical transmembrane segment at 448-468 (PIILAVATVIPIGLAYLLEKV) threads the bilayer. Over 469–477 (NPYIVHSSQ) the chain is Vacuolar. Residues 478-498 (FSVWSMMISVWIFLAWFLACA) form a helical membrane-spanning segment. Residues 499–509 (ADFFRPSALHR) lie on the Cytoplasmic side of the membrane. A helical membrane pass occupies residues 510-530 (AYSYTWIFIATWVMLVINTVY). Over 531–534 (ANQK) the chain is Vacuolar. The helical transmembrane segment at 535 to 555 (GIAAGYFVFFYFSGSFLATWV) threads the bilayer. The Cytoplasmic portion of the chain corresponds to 556–665 (SYLELFALPR…WSWTLPRWTW (110 aa)). Positions 595–620 (ELPSDTGPHAEYPGDADETDPTESTS) are disordered. A helical transmembrane segment spans residues 666–686 (VLQLLLLAPIVLILVGQLALF). Topologically, residues 687–702 (LTTSMSQVGSDGVSTF) are vacuolar. The chain crosses the membrane as a helical span at residues 703–723 (IVYLACAVFTTLLFAPLFPFI). Residues 724 to 729 (HRFTYH) are Cytoplasmic-facing. A helical membrane pass occupies residues 730–750 (IPTFLFLVFVGTLIYNLVAFP). Residues 751–986 (FSPANRLKMF…VEASHGITIQ (236 aa)) are Vacuolar-facing. N-linked (GlcNAc...) asparagine glycosylation is found at asparagine 797, asparagine 840, and asparagine 948.

The protein belongs to the peptidase M28 family. The cofactor is Zn(2+).

Its subcellular location is the vacuole membrane. In terms of biological role, may be involved in vacuolar sorting and osmoregulation. The sequence is that of Vacuolar membrane protease from Blastomyces gilchristii (strain SLH14081) (Blastomyces dermatitidis).